The primary structure comprises 295 residues: Trimeric intracellular cation channel type A (295 aa).

The Lumenal segment spans residues 1–11 (MELLSALSLDD). The helical transmembrane segment at 12 to 32 (LAVAFSKLPVFPLFDVAYYII) threads the bilayer. Residues 33 to 51 (SILYLKYEPGAVDLSKRSP) are Cytoplasmic-facing. The helical transmembrane segment at 52–72 (VASWLCAMLYCFGSYILADVL) threads the bilayer. Residues 73 to 84 (LGESPIHYFSNN) are Lumenal-facing. Glycine 74 is a Ca(2+) binding site. A helical transmembrane segment spans residues 85-105 (ANILLASAVWYLTFFCPLNIF). Over 106–144 (YKIVSFLPLKLVLVGMKEVVRVRKIAMGIHHAHHHYHHG) the chain is Cytoplasmic. The a 1,2-diacyl-sn-glycero-3-phospho-(1D-myo-inositol-4,5-bisphosphate) site is built by lysine 122 and arginine 126. The chain crosses the membrane as a helical span at residues 145-165 (WVIMVLIGWVKGSGVALMSNL). Over 166 to 178 (EQLLRGVWKPETN) the chain is Lumenal. A helical transmembrane segment spans residues 179–199 (EILHMSFPTKASLYGAILFTL). The Cytoplasmic portion of the chain corresponds to 200–201 (QQ). The chain crosses the membrane as a helical span at residues 202-222 (AHWLPISKAYLIFFFTLFMAI). The Lumenal segment spans residues 223 to 233 (CKIYMTATHSH). Residues 234–254 (GSPFAIFESGICCVLFGAANG) traverse the membrane as a helical segment. Residues 255 to 295 (DHDDHGDHHHHHDDHDVSHSTVKSKEELNEGTRKRKTKKAE) are Cytoplasmic-facing. Basic and acidic residues predominate over residues 259-286 (HGDHHHHHDDHDVSHSTVKSKEELNEGT). Positions 259–295 (HGDHHHHHDDHDVSHSTVKSKEELNEGTRKRKTKKAE) are disordered.

It belongs to the TMEM38 family. Homotrimer; conformation seems to be controled by binding to diacylglycerol (DAG).

It is found in the sarcoplasmic reticulum membrane. Its subcellular location is the nucleus membrane. It carries out the reaction K(+)(in) = K(+)(out). With respect to regulation, channel activity is activated by a change of voltage within the sarcoplasmic reticulum lumen and blocked by luminal high Ca(2+) levels. Functionally, intracellular monovalent cation channel required for maintenance of rapid intracellular calcium release. Acts as a potassium counter-ion channel that functions in synchronization with calcium release from intracellular stores. Opened by a change of voltage within the sarcoplasmic reticulum lumen. The sequence is that of Trimeric intracellular cation channel type A (tmem38a) from Xenopus tropicalis (Western clawed frog).